A 166-amino-acid chain; its full sequence is Lipoprotein signal peptidase (166 aa).

4 helical membrane passes run 10–30 (GGAL…DQLT), 32–52 (IAVL…FFNL), 71–91 (WQRW…CYLL), and 100–120 (FSLS…DRLI). Active-site residues include D126 and D144. The helical transmembrane segment at 135–155 (WHWPAFNLADSAITVGAVLLI) threads the bilayer.

This sequence belongs to the peptidase A8 family.

The protein localises to the cell inner membrane. The catalysed reaction is Release of signal peptides from bacterial membrane prolipoproteins. Hydrolyzes -Xaa-Yaa-Zaa-|-(S,diacylglyceryl)Cys-, in which Xaa is hydrophobic (preferably Leu), and Yaa (Ala or Ser) and Zaa (Gly or Ala) have small, neutral side chains.. Its pathway is protein modification; lipoprotein biosynthesis (signal peptide cleavage). This protein specifically catalyzes the removal of signal peptides from prolipoproteins. The sequence is that of Lipoprotein signal peptidase from Burkholderia mallei (strain ATCC 23344).